We begin with the raw amino-acid sequence, 272 residues long: Phosphate import ATP-binding protein PstB 2 (272 aa).

Residues 26–267 (IEINNLCLNY…PIHKQTEDYI (242 aa)) enclose the ABC transporter domain. An ATP-binding site is contributed by 58 to 65 (GPSGCGKS).

Belongs to the ABC transporter superfamily. Phosphate importer (TC 3.A.1.7) family. The complex is composed of two ATP-binding proteins (PstB), two transmembrane proteins (PstC and PstA) and a solute-binding protein (PstS).

It is found in the cell inner membrane. It catalyses the reaction phosphate(out) + ATP + H2O = ADP + 2 phosphate(in) + H(+). In terms of biological role, part of the ABC transporter complex PstSACB involved in phosphate import. Responsible for energy coupling to the transport system. This chain is Phosphate import ATP-binding protein PstB 2, found in Aliivibrio fischeri (strain ATCC 700601 / ES114) (Vibrio fischeri).